We begin with the raw amino-acid sequence, 340 residues long: Holliday junction branch migration complex subunit RuvB (340 aa).

The segment at 1–182 is large ATPase domain (RuvB-L); sequence MSDIDPTVRA…FGIPTRLQFY (182 aa). ATP contacts are provided by residues Leu-21, Arg-22, Gly-63, Lys-66, Thr-67, Thr-68, 129–131, Arg-172, Tyr-182, and Arg-219; that span reads EDF. Thr-67 is a binding site for Mg(2+). The segment at 183-253 is small ATPAse domain (RuvB-S); sequence TEDELFIIVD…LADMALNRLG (71 aa). The segment at 256–340 is head domain (RuvB-H); sequence HLGLDGADRR…PRAQTDLFEG (85 aa). Arg-292, Arg-311, and Arg-316 together coordinate DNA.

Belongs to the RuvB family. As to quaternary structure, homohexamer. Forms an RuvA(8)-RuvB(12)-Holliday junction (HJ) complex. HJ DNA is sandwiched between 2 RuvA tetramers; dsDNA enters through RuvA and exits via RuvB. An RuvB hexamer assembles on each DNA strand where it exits the tetramer. Each RuvB hexamer is contacted by two RuvA subunits (via domain III) on 2 adjacent RuvB subunits; this complex drives branch migration. In the full resolvosome a probable DNA-RuvA(4)-RuvB(12)-RuvC(2) complex forms which resolves the HJ.

It is found in the cytoplasm. It carries out the reaction ATP + H2O = ADP + phosphate + H(+). The RuvA-RuvB-RuvC complex processes Holliday junction (HJ) DNA during genetic recombination and DNA repair, while the RuvA-RuvB complex plays an important role in the rescue of blocked DNA replication forks via replication fork reversal (RFR). RuvA specifically binds to HJ cruciform DNA, conferring on it an open structure. The RuvB hexamer acts as an ATP-dependent pump, pulling dsDNA into and through the RuvAB complex. RuvB forms 2 homohexamers on either side of HJ DNA bound by 1 or 2 RuvA tetramers; 4 subunits per hexamer contact DNA at a time. Coordinated motions by a converter formed by DNA-disengaged RuvB subunits stimulates ATP hydrolysis and nucleotide exchange. Immobilization of the converter enables RuvB to convert the ATP-contained energy into a lever motion, pulling 2 nucleotides of DNA out of the RuvA tetramer per ATP hydrolyzed, thus driving DNA branch migration. The RuvB motors rotate together with the DNA substrate, which together with the progressing nucleotide cycle form the mechanistic basis for DNA recombination by continuous HJ branch migration. Branch migration allows RuvC to scan DNA until it finds its consensus sequence, where it cleaves and resolves cruciform DNA. The sequence is that of Holliday junction branch migration complex subunit RuvB from Roseobacter denitrificans (strain ATCC 33942 / OCh 114) (Erythrobacter sp. (strain OCh 114)).